A 101-amino-acid polypeptide reads, in one-letter code: Phosphoribosyl-AMP cyclohydrolase (101 aa).

D71 is a binding site for Mg(2+). C72 provides a ligand contact to Zn(2+). Positions 73 and 75 each coordinate Mg(2+). The Zn(2+) site is built by C88 and C95.

This sequence belongs to the PRA-CH family. In terms of assembly, homodimer. Mg(2+) is required as a cofactor. It depends on Zn(2+) as a cofactor.

The protein resides in the cytoplasm. It carries out the reaction 1-(5-phospho-beta-D-ribosyl)-5'-AMP + H2O = 1-(5-phospho-beta-D-ribosyl)-5-[(5-phospho-beta-D-ribosylamino)methylideneamino]imidazole-4-carboxamide. The protein operates within amino-acid biosynthesis; L-histidine biosynthesis; L-histidine from 5-phospho-alpha-D-ribose 1-diphosphate: step 3/9. In terms of biological role, catalyzes the hydrolysis of the adenine ring of phosphoribosyl-AMP. This is Phosphoribosyl-AMP cyclohydrolase from Bacillus cereus (strain ATCC 14579 / DSM 31 / CCUG 7414 / JCM 2152 / NBRC 15305 / NCIMB 9373 / NCTC 2599 / NRRL B-3711).